The primary structure comprises 382 residues: 3-dehydroquinate synthase (382 aa).

NAD(+) contacts are provided by residues 81 to 86 (EGEISK), 115 to 119 (GVVGD), 139 to 140 (TS), Lys-152, and Lys-161. Zn(2+)-binding residues include Glu-194, His-256, and His-274.

The protein belongs to the sugar phosphate cyclases superfamily. Dehydroquinate synthase family. It depends on NAD(+) as a cofactor. Requires Co(2+) as cofactor. Zn(2+) is required as a cofactor.

The protein localises to the cytoplasm. It catalyses the reaction 7-phospho-2-dehydro-3-deoxy-D-arabino-heptonate = 3-dehydroquinate + phosphate. The protein operates within metabolic intermediate biosynthesis; chorismate biosynthesis; chorismate from D-erythrose 4-phosphate and phosphoenolpyruvate: step 2/7. Catalyzes the conversion of 3-deoxy-D-arabino-heptulosonate 7-phosphate (DAHP) to dehydroquinate (DHQ). The chain is 3-dehydroquinate synthase from Bradyrhizobium diazoefficiens (strain JCM 10833 / BCRC 13528 / IAM 13628 / NBRC 14792 / USDA 110).